The primary structure comprises 83 residues: Large ribosomal subunit protein eL43 (83 aa).

Residues C38, C41, C56, and C59 each contribute to the Zn(2+) site. The segment at 38 to 59 adopts a C4-type zinc-finger fold; the sequence is CPVCGRKAVKRISTGIWQCQKC.

Belongs to the eukaryotic ribosomal protein eL43 family. Putative zinc-binding subfamily. As to quaternary structure, part of the 50S ribosomal subunit. Requires Zn(2+) as cofactor.

Binds to the 23S rRNA. In Pyrococcus furiosus (strain ATCC 43587 / DSM 3638 / JCM 8422 / Vc1), this protein is Large ribosomal subunit protein eL43.